Reading from the N-terminus, the 520-residue chain is Cytochrome P450 4F8 (520 aa).

A helical transmembrane segment spans residues 15 to 37 (AASPWLLLLVVGASWLLARILAW). Cys468 serves as a coordination point for heme.

This sequence belongs to the cytochrome P450 family. Requires heme as cofactor. Expressed in the epithelium of seminal vesicles, in renal cortex, in adult and fetal liver, in epidermis, in corneal epithelium, in sweat glands, hair follicles, epithelial linings of the ampulla of vas deferens and of the stomach and small intestine, as well as in the transitional epithelium of the bladder and ureter (at protein level). In the epidermis, expressed from the basal cell to the granular cell layers. In the corneal epithelium, expressed in all cell layers. Also detected in prostate. Up-regulated in the epidermis of psoriatic lesions.

It localises to the endoplasmic reticulum membrane. It is found in the microsome membrane. The catalysed reaction is an organic molecule + reduced [NADPH--hemoprotein reductase] + O2 = an alcohol + oxidized [NADPH--hemoprotein reductase] + H2O + H(+). The enzyme catalyses (5Z,8Z,11Z,14Z)-eicosatetraenoate + reduced [NADPH--hemoprotein reductase] + O2 = (18R)-hydroxy-(5Z,8Z,11Z,14Z)-eicosatetraenoate + oxidized [NADPH--hemoprotein reductase] + H2O + H(+). It carries out the reaction (4Z,7Z,10Z,13Z,16Z)-docosapentaenoate + reduced [NADPH--hemoprotein reductase] + O2 = 20-hydroxy-(4Z,7Z,10Z,13Z,16Z)-docosapentaenoate + oxidized [NADPH--hemoprotein reductase] + H2O + H(+). It catalyses the reaction prostaglandin H1 + reduced [NADPH--hemoprotein reductase] + O2 = 19-hydroxyprostaglandin H1 + oxidized [NADPH--hemoprotein reductase] + H2O + H(+). The catalysed reaction is prostaglandin H2 + reduced [NADPH--hemoprotein reductase] + O2 = 19-hydroxyprostaglandin H2 + oxidized [NADPH--hemoprotein reductase] + H2O + H(+). The enzyme catalyses prostaglandin I2 + reduced [NADPH--hemoprotein reductase] + O2 = 19-hydroxy-prostaglandin I2 + oxidized [NADPH--hemoprotein reductase] + H2O + H(+). It carries out the reaction (4Z,7Z,10Z,13Z,16Z,19Z)-docosahexaenoate + reduced [NADPH--hemoprotein reductase] + O2 = 10,11-epoxy-(4Z,7Z,13Z,16Z,19Z)-docosapentaenoate + oxidized [NADPH--hemoprotein reductase] + H2O + H(+). It catalyses the reaction (4Z,7Z,10Z,13Z,16Z,19Z)-docosahexaenoate + reduced [NADPH--hemoprotein reductase] + O2 = 13,14-epoxy-(4Z,7Z,10Z,16Z,19Z)-docosapentaenoate + oxidized [NADPH--hemoprotein reductase] + H2O + H(+). The catalysed reaction is (4Z,7Z,10Z,13Z,16Z,19Z)-docosahexaenoate + reduced [NADPH--hemoprotein reductase] + O2 = 16,17-epoxy-(4Z,7Z,10Z,13Z,19Z)-docosapentaenoate + oxidized [NADPH--hemoprotein reductase] + H2O + H(+). The enzyme catalyses (4Z,7Z,10Z,13Z,16Z,19Z)-docosahexaenoate + reduced [NADPH--hemoprotein reductase] + O2 = 19,20-epoxy-(4Z,7Z,10Z,13Z,16Z)-docosapentaenoate + oxidized [NADPH--hemoprotein reductase] + H2O + H(+). It carries out the reaction (7Z,10Z,13Z,16Z,19Z)-docosapentaenoate + reduced [NADPH--hemoprotein reductase] + O2 = 10,11-epoxy-(7Z,13Z,16Z,19Z)-docosatetraenoate + oxidized [NADPH--hemoprotein reductase] + H2O + H(+). It catalyses the reaction (7Z,10Z,13Z,16Z,19Z)-docosapentaenoate + reduced [NADPH--hemoprotein reductase] + O2 = 13,14-epoxy-(7Z,10Z,16Z,19Z)-docosatetraenoate + oxidized [NADPH--hemoprotein reductase] + H2O + H(+). The catalysed reaction is (7Z,10Z,13Z,16Z,19Z)-docosapentaenoate + reduced [NADPH--hemoprotein reductase] + O2 = 16,17-epoxy-(7Z,10Z,13Z,19Z)-docosatetraenoate + oxidized [NADPH--hemoprotein reductase] + H2O + H(+). The enzyme catalyses (7Z,10Z,13Z,16Z,19Z)-docosapentaenoate + reduced [NADPH--hemoprotein reductase] + O2 = 19,20-epoxy-(7Z,10Z,13Z,16Z)-docosatetraenoate + oxidized [NADPH--hemoprotein reductase] + H2O + H(+). It participates in lipid metabolism; fatty acid metabolism. A cytochrome P450 monooxygenase involved in the metabolism of endogenous polyunsaturated fatty acids (PUFAs) and their oxygenated derivatives (oxylipins). Mechanistically, uses molecular oxygen inserting one oxygen atom into a substrate, and reducing the second into a water molecule, with two electrons provided by NADPH via cytochrome P450 reductase (CPR; NADPH-ferrihemoprotein reductase). Catalyzes the hydroxylation of carbon hydrogen bonds, with preference for omega-1 and omega-2 positions. Hydroxylates (5Z,8Z,11Z,14Z)-eicosatetraenoic acid (arachidonate) predominantly at omega-2 position to form (18R)-hydroxyeicosatetraenoic acid (18R-HETE). Exhibits omega-1 hydroxylase activity toward prostaglandin (PG) H1, PGH2 and PGI2. Catalyzes the epoxidation of double bonds of PUFAs, including docosahexaenoic and docosapentaenoic acids. Shows little activity against PGD2, PGE1, PGE2, PGF2alpha, and leukotriene B4. The sequence is that of Cytochrome P450 4F8 from Homo sapiens (Human).